We begin with the raw amino-acid sequence, 98 residues long: Citrate lyase acyl carrier protein (98 aa).

An O-(phosphoribosyl dephospho-coenzyme A)serine modification is found at Ser-14.

It belongs to the CitD family. Oligomer with a subunit composition of (alpha,beta,gamma)6.

It is found in the cytoplasm. Its function is as follows. Covalent carrier of the coenzyme of citrate lyase. The polypeptide is Citrate lyase acyl carrier protein (Escherichia coli O81 (strain ED1a)).